Here is a 341-residue protein sequence, read N- to C-terminus: Ketol-acid reductoisomerase (NADP(+)) (341 aa).

The KARI N-terminal Rossmann domain occupies 2–182 (TDIVYDKDAD…GGLRAGGIRT (181 aa)). NADP(+) is bound by residues 25 to 28 (YGSQ), K48, S51, S53, and 83 to 86 (DQHQ). Residue H108 is part of the active site. NADP(+) is bound at residue G134. Residues 183 to 328 (TFTEETETDL…RELRKLFAWN (146 aa)) enclose the KARI C-terminal knotted domain. Residues D191, E195, E227, and E231 each coordinate Mg(2+). S252 provides a ligand contact to substrate.

Belongs to the ketol-acid reductoisomerase family. Requires Mg(2+) as cofactor.

It catalyses the reaction (2R)-2,3-dihydroxy-3-methylbutanoate + NADP(+) = (2S)-2-acetolactate + NADPH + H(+). It carries out the reaction (2R,3R)-2,3-dihydroxy-3-methylpentanoate + NADP(+) = (S)-2-ethyl-2-hydroxy-3-oxobutanoate + NADPH + H(+). It functions in the pathway amino-acid biosynthesis; L-isoleucine biosynthesis; L-isoleucine from 2-oxobutanoate: step 2/4. The protein operates within amino-acid biosynthesis; L-valine biosynthesis; L-valine from pyruvate: step 2/4. In terms of biological role, involved in the biosynthesis of branched-chain amino acids (BCAA). Catalyzes an alkyl-migration followed by a ketol-acid reduction of (S)-2-acetolactate (S2AL) to yield (R)-2,3-dihydroxy-isovalerate. In the isomerase reaction, S2AL is rearranged via a Mg-dependent methyl migration to produce 3-hydroxy-3-methyl-2-ketobutyrate (HMKB). In the reductase reaction, this 2-ketoacid undergoes a metal-dependent reduction by NADPH to yield (R)-2,3-dihydroxy-isovalerate. The protein is Ketol-acid reductoisomerase (NADP(+)) of Clavibacter michiganensis subsp. michiganensis (strain NCPPB 382).